A 289-amino-acid chain; its full sequence is MAASASSLALSSFNPKSLPFGVSRPASVSLLSPSLSFKLNSDSVSFSIAAKWNSPASRFARNVAITSEFEVEEDGFADVAPPKEQSFSADLKLFVGNLPFNVDSAQLAQLFESAGNVEMVEVIYDKITGRSRGFGFVTMSSVSEVEAAAQQFNGYELDGRPLRVNAGPPPPKREDGFSRGPRSSFGSSGSGYGGGGGSGAGSGNRVYVGNLSWGVDDMALESLFSEQGKVVEARVIYDRDSGRSKGFGFVTYDSSQEVQNAIKSLDGADLDGRQIRVSEAEARPPRRQY.

A chloroplast-targeting transit peptide spans Met1–Asn62. Phosphoserine is present on residues Ser6 and Ser12. Val63 carries the N-acetylvaline modification. The region spanning Leu91 to Pro169 is the RRM 1 domain. The disordered stretch occupies residues Asp158–Gly199. The tract at residues Pro170–Gly203 is linker (Gly-rich). The segment covering Ser178 to Ser187 has biased composition (low complexity). Positions Ser188–Gly199 are enriched in gly residues. Positions Asn204 to Ala282 constitute an RRM 2 domain.

Post-translationally, ADP-ribosylated by the Pseudomonas syringae type III effector HopU1. ADP-ribosylation reduces the ability of the protein to bind RNA. Phosphorylated on tyrosine residues after treatment with abscisic acid (ABA). Phosphorylation may reduce the ability of the protein to bind RNA.

Its subcellular location is the plastid. It is found in the chloroplast. Functionally, could be involved in splicing and/or processing of chloroplast RNA's. This Arabidopsis thaliana (Mouse-ear cress) protein is RNA-binding protein CP29B, chloroplastic.